Reading from the N-terminus, the 530-residue chain is Autoinducer-2 kinase (530 aa).

The protein belongs to the FGGY kinase family.

It localises to the cytoplasm. The enzyme catalyses (S)-4,5-dihydroxypentane-2,3-dione + ATP = (2S)-2-hydroxy-3,4-dioxopentyl phosphate + ADP + H(+). Catalyzes the phosphorylation of autoinducer-2 (AI-2) to phospho-AI-2, which subsequently inactivates the transcriptional regulator LsrR and leads to the transcription of the lsr operon. Phosphorylates the ring-open form of (S)-4,5-dihydroxypentane-2,3-dione (DPD), which is the precursor to all AI-2 signaling molecules, at the C5 position. The polypeptide is Autoinducer-2 kinase (Yersinia pestis bv. Antiqua (strain Antiqua)).